Here is a 2629-residue protein sequence, read N- to C-terminus: MEKLCGYVPVHPDILSLKNRCLTMLSDIQPLEKIHGQRSVNPDILSLENRCLTLLPDLQPMEKIHGQRSVHPDILSSENRCLTLLPDLQSLEKLCGHMSSHPDVLSLENRCLATLPTVKRTVSSGPLLQCLHRSHTAQADLRDPNFRNCLFPEPPTIEAPCFLKELDLPTGPRALKSMSATARVQEVALGQRCVSEGKELQEEKESAEVPMPLYSLSLGGEEEEVVGAPVLKLTSGDSDSHPETTDQILQEKKMALLTLLCSAMASSVNVKDASDPTRASIHEVCSALAPLEPEFILKASLYARQQLNLRDIANIVLAVAALLPACRPHVRRYYSAIVHLPSDWIQVAEFYQSLAEGDEKKLVPLPACLRAAMTDKFAQFDEYQLAKYNPRKHRSKTRSRQPPRPQRTKPPFSESGKCFPKSVWPLKNEQISFEAAYNAVSEKKRLPRFTLKKLVEQLHIHEPAQHVQALLGYRYPSTLELFSRSHLPGPWDSSRAGQRMKLQRPETWERELSLRGNRASVWEELIDNGKLPFMAMLRNLCNLLRTGISAHHHELVLQRLQHEKSVIHSRQFPFRFLNAHDSLDRLEAQLRSKASPFPSNTTLMKRIMIRNSKKIKRPANPRYLCTLTQRQLRAAMAIPVMYEHLKREKLRLHKARQWTCDLELLERYRQALETAVNISVKHNLPPLPGRTLLVYLTDANANRLCPKSHLQGPPLNYVLLLIGMMMARAEQTTVWLCGTGTVKTPVLTADEGILKTAIKLQAQVQELEENDEWPLETFEKYLLSLAVRRTPIDRVILFGQRMDTELLNVAKQIIWQHVNSKCLFVSVLLRKMQYMSPNLNPNDVTLSGCTDGILKFIAEHGASRLLEHVGQLDKIFKIPPPPGKTKVSPLRPLEENNPGPFVPISQHGWRNIRLFISSTFRDMHGERDLLMRSVLPALQARAFPHRISLHAIDLRWGITEEETRRNRQLEVCLGEVENSQLFVGILGSRYGYTPPSYDLPDHPHFHWTQRYPSGRSVTEMEVMQFLNRGQRSEPSDQALIYFRDPGFLSSVPDVWKPDFISESEEAAHRVSELKRFLQEQKEVTCRRYSCEWGGVAAGRPYTGGLEEFGQLVLQDVWSVIQKRYLQPGAQLEQPGSISEEDLIQASFQQLKSPPSPARPRLLQDTVQQLMLPHGRLSLVIGQAGQGKTAFLASLVSALKVPDQPNVAPFVFFHFSAARPDQCLAFNLLRRLCTHLHQKLGEPSALPSTYRGLVWELQQKLLLKSAQWLQPGQTLVLIIDGADKLVDHNGQLISDWIPKSLPRRVHLVLSVSSDSGLGETLQQSQSAYVVALGSLVPSSRAQLVREELALYGKRLEESPFNNQMRLLLAKQGSSLPLYLHLVTDYLRLFTLYEQVSERLRTLPATLPLLLQHILSTLEQEHGHNVLPQALTALEVTHSGLTVDQLHAVLSTWLTLPKETKSWEEAVAASHSGNLYPLAPFAYLVQSLRSLLGEGPVERPGARLCLSDGPLRTAVKRRYGKRLGLEKTAHVLIAAHLWKMCDPDASGTFRSCPPEALKDLPYHLLQSGNHGLLAKFLTNLHVVAAYLEVGLVPDLLEAYELYASSKPEVNQKLPEADVAVFHNFLKQQASLLTQYPLLLLQQAASQPEESPVCCQAPLLTQRWHNQCILKWINKPQTLKGQQSLSLPISSSPTAVAFSPNGQRAAVGTAGGTIYLLNLRTWQEEKALVSGCDGISSFAFLSDTALFLTTFDGLLELWDLQHGCWVFQTKAHQYQITGCCLSPDRRLLATVCLGGYVKLWDTVQGQLAFQYTHPKSLNCITFHPEGQVVATGNWSGIVTFFQADGLKVTKELGGPGPSVRTLAFSAPGKVVALGRIDGTVELWAWQEGTRLAAFPAQCGGVSTVLFLHAGGRFLTAGEDGKAQLWSGFLGRPRGCLGSLYLSPALSVALNPDGDQVAVGYRGDGIKIYRISSGPQEAQCQELNVAVSALVWLSPSVLVSGAEDGSLHGWMLRRNSLQSLWLSSVCQKPVLGLAASQEFLASASEDFTVRLWPRQLLTQPHAVEELPCAAELRGHEGPVCCCSFSPDGRILATAGRDRNLLCWDVKVAQAPLLIHTFSSCHRDWITGCTWTKDNILISCSSDGSVGLWNPEAGQQLGQFPGHQSAVSAVVAVEEHIVSVSRDGTLKVWDRQGVELTSIPAHSGPISQCAAALEPRPAGQPGSELMVVTVGLDGATKLWHPLLVCQIHTLQGHSGPVTAAAASEASGLLLTSDNSSVRLWQIPKEADDTCKPRSSAVITAVAWAPDGSLVVSGNEAGELTLWQKAQAVATARAPGRVSDLIWCSANAFFVLSANENVSEWQVELRKGSTCTNFRLYLKRVLQEDLGVLTGMALAPDGQSLILMKEDVELLQMKPGSTPSSICRRYAVHSSILCTSKDYGLFYLQQGNSGSLSILEQEESGKFEKTLDFNLNLNNPNGSPVSITQAEPESGSSLLCATSDGMLWNLSECTPEGEWVVDNIWQKKSRNPKSRTPGTDSSPGLFCMDSWVEPTHLKARQCKKIHLGSVTALHVLPGLLVTASEDRDVKLWERPSMQLLGLFRCEGPVSCLEPWMEPSSPLQLAVGDAQGNLYFLSWE.

TEP1 N-terminal repeat units lie at residues 1 to 30 (MEKL…DIQP), 31 to 60 (LEKI…DLQP), 61 to 90 (MEKI…DLQS), and 91 to 120 (LEKL…TVKR). In terms of domain architecture, TROVE spans 231-689 (LKLTSGDSDS…VKHNLPPLPG (459 aa)). Basic residues predominate over residues 390 to 401 (PRKHRSKTRSRQ). Residues 390-416 (PRKHRSKTRSRQPPRPQRTKPPFSESG) form a disordered region. The region spanning 1175–1582 (RLSLVIGQAG…KFLTNLHVVA (408 aa)) is the NACHT domain. ATP is bound at residue 1181 to 1188 (GQAGQGKT). WD repeat units follow at residues 1424–1461 (VLPQ…TKSW), 1685–1724 (PISS…EEKA), 1727–1765 (SGCD…WVFQ), 1768–1807 (AHQY…LAFQ), 1809–1848 (THPK…VTKE), 1851–1890 (GPGP…RLAA), 1893–1934 (AQCG…GCLG), 1936–1975 (LYLS…QEAQ), 1978–2016 (ELNV…LQSL), 2019–2058 (SSVC…QPHA), 2070–2109 (GHEG…APLL), 2116–2154 (CHRD…QLGQ), 2157–2194 (GHQS…LTSI), 2200–2244 (PISQ…QIHT), 2247–2285 (GHSG…DDTC), 2288–2327 (RSSA…ATAR), 2329–2365 (PGRV…GSTC), 2378–2427 (EDLG…SSIL), 2470–2510 (PNGS…GEWV), 2555–2592 (IHLG…LLGL), and 2594–2628 (RCEG…FLSW).

Associated component of the telomerase holoenzyme complex. Component of the vault ribonucleoprotein particle, at least composed of MVP, PARP4 and one or more vault RNAs (vRNAs). Binds to VAULTRC1, VAULTRC2 and VAULTRC4/hvg4 vRNAs.

Its subcellular location is the nucleus. The protein localises to the chromosome. It is found in the telomere. Functionally, component of the telomerase ribonucleoprotein complex that is essential for the replication of chromosome termini. Also a component of the ribonucleoprotein vaults particle, a multi-subunit structure involved in nucleo-cytoplasmic transport. Responsible for the localizing and stabilizing vault RNA (vRNA) association in the vault ribonucleoprotein particle. Binds to TERC. This chain is Telomerase protein component 1 (Tep1), found in Rattus norvegicus (Rat).